Here is a 180-residue protein sequence, read N- to C-terminus: UPF0397 protein SSA_0592 (180 aa).

The next 5 membrane-spanning stretches (helical) occupy residues 9 to 29 (VVAT…NIPT), 45 to 65 (LFSV…GHAI), 72 to 92 (GGLW…VGFF), 113 to 133 (LIQF…DVIV), and 146 to 166 (IVAI…LLTA).

The protein belongs to the UPF0397 family.

The protein resides in the cell membrane. This Streptococcus sanguinis (strain SK36) protein is UPF0397 protein SSA_0592.